The following is an 87-amino-acid chain: U3-theraphotoxin-Hhn1a 12 (87 aa).

An N-terminal signal peptide occupies residues 1–24 (MVNMKASMFLTFAGLVLLFVVCYA). The propeptide occupies 25–52 (SESEEKEFPKEMLSSIFAVDKDFKQEER). Cystine bridges form between Cys54–Cys67, Cys61–Cys72, and Cys66–Cys79.

It belongs to the neurotoxin 10 (Hwtx-1) family. 51 (Hntx-8) subfamily. Hntx-8 sub-subfamily. Expressed by the venom gland.

It localises to the secreted. Ion channel inhibitor. The chain is U3-theraphotoxin-Hhn1a 12 from Cyriopagopus hainanus (Chinese bird spider).